The chain runs to 170 residues: MELKDYIATIENYPKEGVVFRDISPLMADGNAYNYAATEIVQYARDKEIDMVVGPEARGFIIGCPVAFALGVGFAPVRKPGKLPREVIEATYEKEYGTDTLTMHSDSIKPGQRVLIVDDLLATGGTIAATIELVEKMGGVVVGCAFLIELDELKGREKIGNYDYKVLMHY.

It belongs to the purine/pyrimidine phosphoribosyltransferase family. Homodimer.

It localises to the cytoplasm. It carries out the reaction AMP + diphosphate = 5-phospho-alpha-D-ribose 1-diphosphate + adenine. The protein operates within purine metabolism; AMP biosynthesis via salvage pathway; AMP from adenine: step 1/1. Functionally, catalyzes a salvage reaction resulting in the formation of AMP, that is energically less costly than de novo synthesis. In Lactococcus lactis subsp. cremoris (strain MG1363), this protein is Adenine phosphoribosyltransferase.